Here is a 197-residue protein sequence, read N- to C-terminus: Auxin-responsive protein IAA31 (197 aa).

Disordered regions lie at residues M1–K43 and S66–Q90. The short motif at L9–L13 is the EAR-like (transcriptional repression) element. Residues G99–G186 form the PB1 domain.

It belongs to the Aux/IAA family. As to quaternary structure, homodimers and heterodimers. In terms of tissue distribution, highly expressed in etiolated seedlings. Expressed in roots.

The protein resides in the nucleus. In terms of biological role, aux/IAA proteins are short-lived transcriptional factors that function as repressors of early auxin response genes at low auxin concentrations. The polypeptide is Auxin-responsive protein IAA31 (IAA31) (Oryza sativa subsp. japonica (Rice)).